The primary structure comprises 193 residues: MVLFLIRIFSDSDKEENMGIEKTVSELADILGVSRQAVNNRVKSLPEEDLDKNEKGVTVVKRSGLVKLEEIYKKTIFDDEPISEETKQRELLEILVDEKNTEITRLYEQLKAKDAQLASKDEQMRVKDVQIAEKDKQLDQQQQLTAKAMADKETLKLELEEAKAEANQARLQVEEVQAEVGPKKGFLTRLFAK.

Positions 86 to 181 (TKQRELLEIL…QVEEVQAEVG (96 aa)) form a coiled coil.

This is an uncharacterized protein from Streptococcus pyogenes serotype M6 (strain ATCC BAA-946 / MGAS10394).